A 458-amino-acid chain; its full sequence is COBRA-like protein 2 (458 aa).

The N-terminal stretch at M1–A29 is a signal peptide. Residues N38, N163, N171, N211, N236, N318, N333, and N352 are each glycosylated (N-linked (GlcNAc...) asparagine). The chain crosses the membrane as a helical span at residues V430–V450.

The protein belongs to the COBRA family.

It is found in the membrane. The chain is COBRA-like protein 2 (BC1L2) from Oryza sativa subsp. japonica (Rice).